Here is a 159-residue protein sequence, read N- to C-terminus: Small ribosomal subunit protein uS9 (159 aa).

This sequence belongs to the universal ribosomal protein uS9 family.

The chain is Small ribosomal subunit protein uS9 from Bradyrhizobium diazoefficiens (strain JCM 10833 / BCRC 13528 / IAM 13628 / NBRC 14792 / USDA 110).